The primary structure comprises 268 residues: Putative cysteine-rich repeat secretory protein 5 (268 aa).

The first 24 residues, 1–24, serve as a signal peptide directing secretion; the sequence is MTGINTHFAVALFCFFSFSLRAMS. Gnk2-homologous domains are found at residues 27–129 and 135–248; these read SQML…NVSF and DVPS…ISAL.

The protein belongs to the cysteine-rich repeat secretory protein family.

The protein resides in the secreted. The sequence is that of Putative cysteine-rich repeat secretory protein 5 (CRRSP5) from Arabidopsis thaliana (Mouse-ear cress).